We begin with the raw amino-acid sequence, 158 residues long: Non-specific lipid transfer protein GPI-anchored 29 (158 aa).

Residues M1–G24 form the signal peptide. 4 disulfide bridges follow: C28–C71, C38–C55, C56–C95, and C69–C105. Residue N84 is glycosylated (N-linked (GlcNAc...) asparagine). A lipid anchor (GPI-anchor amidated serine) is attached at S134. Positions K135–I158 are cleaved as a propeptide — removed in mature form.

This sequence belongs to the plant LTP family. As to expression, confined to the ovaries of the inflorescence.

The protein resides in the secreted. Its subcellular location is the cell membrane. In terms of biological role, probable lipid transfer protein. In Arabidopsis thaliana (Mouse-ear cress), this protein is Non-specific lipid transfer protein GPI-anchored 29.